The following is a 147-amino-acid chain: Hemoglobin subunit epsilon (147 aa).

The Globin domain occupies 3–147 (HFTAEEKATV…VANALAHKYH (145 aa)). Phosphoserine is present on residues serine 14 and serine 51. Positions 64 and 93 each coordinate heme b.

Belongs to the globin family. In terms of assembly, heterotetramer of two alpha chains and two epsilon chains in early embryonic hemoglobin Gower-2; two zeta chains and two epsilon chains in early embryonic hemoglobin Gower-1. In terms of tissue distribution, red blood cells.

In terms of biological role, the epsilon chain is a beta-type chain of early mammalian embryonic hemoglobin. This is Hemoglobin subunit epsilon (HBE1) from Bradypus tridactylus (Pale-throated three-toed sloth).